Here is a 235-residue protein sequence, read N- to C-terminus: UDP-2,3-diacylglucosamine hydrolase (235 aa).

Mn(2+) contacts are provided by Asp-9, His-11, Asp-42, Asn-80, and His-115. 80–81 (NR) is a binding site for substrate. Residues Asp-123, Ser-161, Lys-165, Lys-168, and His-196 each contribute to the substrate site. 2 residues coordinate Mn(2+): His-196 and His-198.

Belongs to the LpxH family. Mn(2+) serves as cofactor.

The protein localises to the cell inner membrane. It carries out the reaction UDP-2-N,3-O-bis[(3R)-3-hydroxytetradecanoyl]-alpha-D-glucosamine + H2O = 2-N,3-O-bis[(3R)-3-hydroxytetradecanoyl]-alpha-D-glucosaminyl 1-phosphate + UMP + 2 H(+). It participates in glycolipid biosynthesis; lipid IV(A) biosynthesis; lipid IV(A) from (3R)-3-hydroxytetradecanoyl-[acyl-carrier-protein] and UDP-N-acetyl-alpha-D-glucosamine: step 4/6. Its function is as follows. Hydrolyzes the pyrophosphate bond of UDP-2,3-diacylglucosamine to yield 2,3-diacylglucosamine 1-phosphate (lipid X) and UMP by catalyzing the attack of water at the alpha-P atom. Involved in the biosynthesis of lipid A, a phosphorylated glycolipid that anchors the lipopolysaccharide to the outer membrane of the cell. This is UDP-2,3-diacylglucosamine hydrolase from Actinobacillus succinogenes (strain ATCC 55618 / DSM 22257 / CCUG 43843 / 130Z).